The sequence spans 806 residues: Lon protease (806 aa).

Residues 13 to 206 enclose the Lon N-terminal domain; that stretch reads LPMMPIRDVV…RVAEMLDIEI (194 aa). 356–363 provides a ligand contact to ATP; the sequence is GPPGVGKT. The Lon proteolytic domain maps to 599 to 780; that stretch reads KNEIGAATGL…DEVLKIALER (182 aa). Active-site residues include S686 and K729.

The protein belongs to the peptidase S16 family. In terms of assembly, homohexamer. Organized in a ring with a central cavity.

It is found in the cytoplasm. It carries out the reaction Hydrolysis of proteins in presence of ATP.. In terms of biological role, ATP-dependent serine protease that mediates the selective degradation of mutant and abnormal proteins as well as certain short-lived regulatory proteins. Required for cellular homeostasis and for survival from DNA damage and developmental changes induced by stress. Degrades polypeptides processively to yield small peptide fragments that are 5 to 10 amino acids long. Binds to DNA in a double-stranded, site-specific manner. The chain is Lon protease from Solibacter usitatus (strain Ellin6076).